The chain runs to 200 residues: MSQHELPSLPYDYDALEPHISEQVVTWHHDTHHQSYVDGLNSAEETLAENRETGDHASTAGALGDVTHNGCGHYLHTMFWEHMSPDGGGEPSGALADRIAADFGSYENWRAEFEVAAGAASGWALLVYDPVAKQLRNVAVDNHDEGALWGSHPILALDVWEHSYYYDYGPDRGSFVDAFFEVIDWDPIAANYDDVVSLFE.

4 residues coordinate Mn(2+): H28, H76, D158, and H162.

It belongs to the iron/manganese superoxide dismutase family. The cofactor is Mn(2+).

It catalyses the reaction 2 superoxide + 2 H(+) = H2O2 + O2. In terms of biological role, destroys superoxide anion radicals which are normally produced within the cells and which are toxic to biological systems. This Halobacterium salinarum (strain ATCC 700922 / JCM 11081 / NRC-1) (Halobacterium halobium) protein is Superoxide dismutase [Mn] 2 (sod2).